Reading from the N-terminus, the 149-residue chain is Large ribosomal subunit protein uL11 (149 aa).

Belongs to the universal ribosomal protein uL11 family. As to quaternary structure, part of the ribosomal stalk of the 50S ribosomal subunit. Interacts with L10 and the large rRNA to form the base of the stalk. L10 forms an elongated spine to which L12 dimers bind in a sequential fashion forming a multimeric L10(L12)X complex. One or more lysine residues are methylated.

Functionally, forms part of the ribosomal stalk which helps the ribosome interact with GTP-bound translation factors. In Methylobacterium sp. (strain 4-46), this protein is Large ribosomal subunit protein uL11.